The following is a 111-amino-acid chain: Large ribosomal subunit protein uL22 (111 aa).

The protein belongs to the universal ribosomal protein uL22 family. In terms of assembly, part of the 50S ribosomal subunit.

In terms of biological role, this protein binds specifically to 23S rRNA; its binding is stimulated by other ribosomal proteins, e.g. L4, L17, and L20. It is important during the early stages of 50S assembly. It makes multiple contacts with different domains of the 23S rRNA in the assembled 50S subunit and ribosome. Functionally, the globular domain of the protein is located near the polypeptide exit tunnel on the outside of the subunit, while an extended beta-hairpin is found that lines the wall of the exit tunnel in the center of the 70S ribosome. The polypeptide is Large ribosomal subunit protein uL22 (Acholeplasma laidlawii (strain PG-8A)).